Consider the following 196-residue polypeptide: MDNHAAVREFDEERATAAIRELLIAVGEDPDREGLLETPARVARAYKETFAGLHEDPTTVLEKTFSEGHEELVLVREIPIYSMCEHHLVPFFGVAHIGYIPGKSGKVTGLSKLARLADMFAKRPQVQERLTSQIADALVEKLDAQAVAVVIEAEHLCMAMRGIRKPGAVTTTSAVRGGFKNNAASRAEVFSLIRGH.

The Zn(2+) site is built by Cys84, His87, and Cys157.

The protein belongs to the GTP cyclohydrolase I family. In terms of assembly, toroid-shaped homodecamer, composed of two pentamers of five dimers.

It catalyses the reaction GTP + H2O = 7,8-dihydroneopterin 3'-triphosphate + formate + H(+). It functions in the pathway cofactor biosynthesis; 7,8-dihydroneopterin triphosphate biosynthesis; 7,8-dihydroneopterin triphosphate from GTP: step 1/1. The protein is GTP cyclohydrolase 1 of Corynebacterium glutamicum (strain ATCC 13032 / DSM 20300 / JCM 1318 / BCRC 11384 / CCUG 27702 / LMG 3730 / NBRC 12168 / NCIMB 10025 / NRRL B-2784 / 534).